The chain runs to 147 residues: Putative protein adenylyltransferase MJ1305 (147 aa).

A GSX(10)DXD motif motif is present at residues 32–46; the sequence is GSYARGTAVEYSDVD. Mg(2+)-binding residues include Asp-44 and Asp-46.

The protein belongs to the MntA antitoxin family. It depends on Mg(2+) as a cofactor.

The enzyme catalyses L-tyrosyl-[protein] + ATP = O-(5'-adenylyl)-L-tyrosyl-[protein] + diphosphate. The catalysed reaction is O-(5'-adenylyl)-L-tyrosyl-[protein] + ATP = O-[5'-(adenylyl-(5'-&gt;3')-adenylyl)]-L-tyrosyl-[protein] + diphosphate. Putative antitoxin component of a putative type VII toxin-antitoxin (TA) system. Its cognate toxin might be MJ1304, which it might AMPylate. The protein is Putative protein adenylyltransferase MJ1305 of Methanocaldococcus jannaschii (strain ATCC 43067 / DSM 2661 / JAL-1 / JCM 10045 / NBRC 100440) (Methanococcus jannaschii).